The sequence spans 507 residues: FAD-linked oxidoreductase OXR1 (507 aa).

The first 21 residues, 1–21 (MTIKFASLILAGLGLGSGALG), serve as a signal peptide directing secretion. N-linked (GlcNAc...) asparagine glycans are attached at residues Asn34 and Asn65. An FAD-binding PCMH-type domain is found at 73–245 (YAPPTFKVSV…VSATYKLKPL (173 aa)). N-linked (GlcNAc...) asparagine glycosylation is found at Asn263 and Asn288.

This sequence belongs to the oxygen-dependent FAD-linked oxidoreductase family. FAD serves as cofactor.

It carries out the reaction dihydropyriculol + A = pyriculol + AH2. The catalysed reaction is dihydropyriculariol + A = pyriculariol + AH2. It participates in polyketide biosynthesis. Functionally, FAD-linked oxidoreductase; part of the gene cluster that mediates the biosynthesis of pyriculol and pyriculariol, two heptaketides that induce lesion formation upon application on rice leaves but are dispensable for pathogenicity. The highly reducing polyketide synthase synthesizes the heptaketide backbone of pyriculol and pyriculariol. Pyriculol and pyriculariol contain several hydroxyl moieties and double bonds, so it can be assumed that several reduction steps occur during biosynthesis. These reactions could be executed by PKS19 itself or partly by the tailoring enzymes OXR1, OXR2, RED1, RED2 or RED3, identified within the cluster. The FAD-linked oxidoreductase OXR1 is the only tailoring enzyme for which the function has been determined yet, and is involved in the oxidation of dihydropyriculol and dihydropyriculariol into pyriculol and pyriculariol, respectively. This is FAD-linked oxidoreductase OXR1 from Pyricularia oryzae (strain 70-15 / ATCC MYA-4617 / FGSC 8958) (Rice blast fungus).